The following is a 449-amino-acid chain: Tripartite motif-containing protein 64 (449 aa).

The RING-type zinc-finger motif lies at 15–56 (CCICVNYFIDPVTIDCGHSFCRPCLCLCSEEGRAPMRCPSCR). A B box-type zinc finger spans residues 87 to 128 (SSDNICVLHEETKELFCEADKRLLCGPCSESPEHMAHSHSPI). Positions 92, 95, 114, and 120 each coordinate Zn(2+). Residues 189 to 225 (LDEEEQRHLQALEREAEELFQQLQDSQVRMTQHLERM) are a coiled coil. A B30.2/SPRY domain is found at 269 to 449 (LTSWCITGVL…LRPFFCFGCT (181 aa)).

The protein belongs to the TRIM/RBCC family.

The protein is Tripartite motif-containing protein 64 (TRIM64) of Homo sapiens (Human).